A 125-amino-acid polypeptide reads, in one-letter code: Prefoldin subunit beta (125 aa).

It belongs to the prefoldin subunit beta family. As to quaternary structure, heterohexamer of two alpha and four beta subunits.

The protein resides in the cytoplasm. Its function is as follows. Molecular chaperone capable of stabilizing a range of proteins. Seems to fulfill an ATP-independent, HSP70-like function in archaeal de novo protein folding. This Halobacterium salinarum (strain ATCC 29341 / DSM 671 / R1) protein is Prefoldin subunit beta.